The primary structure comprises 262 residues: tRNA pseudouridine synthase A (262 aa).

The active-site Nucleophile is Asp-51. Substrate is bound at residue Tyr-109.

This sequence belongs to the tRNA pseudouridine synthase TruA family. In terms of assembly, homodimer.

The enzyme catalyses uridine(38/39/40) in tRNA = pseudouridine(38/39/40) in tRNA. Its function is as follows. Formation of pseudouridine at positions 38, 39 and 40 in the anticodon stem and loop of transfer RNAs. The chain is tRNA pseudouridine synthase A from Dechloromonas aromatica (strain RCB).